We begin with the raw amino-acid sequence, 282 residues long: Bifunctional protein FolD (282 aa).

NADP(+)-binding positions include 162 to 164, serine 187, and valine 228; that span reads GRS.

This sequence belongs to the tetrahydrofolate dehydrogenase/cyclohydrolase family. Homodimer.

It catalyses the reaction (6R)-5,10-methylene-5,6,7,8-tetrahydrofolate + NADP(+) = (6R)-5,10-methenyltetrahydrofolate + NADPH. It carries out the reaction (6R)-5,10-methenyltetrahydrofolate + H2O = (6R)-10-formyltetrahydrofolate + H(+). It participates in one-carbon metabolism; tetrahydrofolate interconversion. Its function is as follows. Catalyzes the oxidation of 5,10-methylenetetrahydrofolate to 5,10-methenyltetrahydrofolate and then the hydrolysis of 5,10-methenyltetrahydrofolate to 10-formyltetrahydrofolate. The sequence is that of Bifunctional protein FolD from Thermus thermophilus (strain ATCC 27634 / DSM 579 / HB8).